A 484-amino-acid chain; its full sequence is MKIPRTMSTQHPDNVHTPFFTENIELTGEDEVKEAYYVYSHLGCTEQMWDCEGKEVDNYVVKKLLSRYGDYFKEHHLGRDLFLTLRVPNPEIERTEAKILLETLGSIPRSYDVAHHFYNDTYAPIFEIILPMTTSFASIDNIYQYYCDFVIGQQYKRLGGRDLTIAEWIGPFHPDKIRVIPLFEDKDGMLAADTILRRYFQDKDLDYQRVFLARSDPAVNYGQIGAVLLNKIALWRLHLLSEDTGIPVYPIIGAGSAPFRGNLRPDTVRRVTDEYAGAYTFTIQSAFKYDTNLEEAVSAIRYLEEREITPAREIDDTYAISLIERYAAGYQKQIRSLAPLINRVAAYIPSRRKRKLHVGLFGYSRNMGGVSLPRAITVTAALYSIGIPPEVLGLSALTENDREFVLENYRYVTEDLSDACRYLNPDSSFLPDEIKKILPDWIEIDPHSEHRVLSGQIEKAVTACQIDSVQDMIIRAGAIRKFLG.

The protein belongs to the PEPCase type 2 family. Homotetramer. Mg(2+) is required as a cofactor.

It catalyses the reaction oxaloacetate + phosphate = phosphoenolpyruvate + hydrogencarbonate. Functionally, catalyzes the irreversible beta-carboxylation of phosphoenolpyruvate (PEP) to form oxaloacetate (OAA), a four-carbon dicarboxylic acid source for the tricarboxylic acid cycle. In Methanospirillum hungatei JF-1 (strain ATCC 27890 / DSM 864 / NBRC 100397 / JF-1), this protein is Phosphoenolpyruvate carboxylase.